A 363-amino-acid chain; its full sequence is tRNA-specific 2-thiouridylase MnmA (363 aa).

ATP-binding positions include 8 to 15 (AMSGGVDS) and L34. The active-site Nucleophile is the C103. A disulfide bridge links C103 with C195. G127 is a binding site for ATP. The interval 145–147 (KDQ) is interaction with tRNA. The active-site Cysteine persulfide intermediate is C195.

It belongs to the MnmA/TRMU family.

The protein localises to the cytoplasm. The catalysed reaction is S-sulfanyl-L-cysteinyl-[protein] + uridine(34) in tRNA + AH2 + ATP = 2-thiouridine(34) in tRNA + L-cysteinyl-[protein] + A + AMP + diphosphate + H(+). Catalyzes the 2-thiolation of uridine at the wobble position (U34) of tRNA, leading to the formation of s(2)U34. This Thermobifida fusca (strain YX) protein is tRNA-specific 2-thiouridylase MnmA.